The sequence spans 495 residues: Cytochrome P450 2B15 (495 aa).

Serine 129 carries the post-translational modification Phosphoserine; by PKA. Cysteine 437 serves as a coordination point for heme.

The protein belongs to the cytochrome P450 family. Heme serves as cofactor.

It localises to the endoplasmic reticulum membrane. The protein localises to the microsome membrane. The enzyme catalyses an organic molecule + reduced [NADPH--hemoprotein reductase] + O2 = an alcohol + oxidized [NADPH--hemoprotein reductase] + H2O + H(+). Functionally, cytochromes P450 are a group of heme-thiolate monooxygenases. In liver microsomes, this enzyme is involved in an NADPH-dependent electron transport pathway. It oxidizes a variety of structurally unrelated compounds, including steroids, fatty acids, and xenobiotics. This Rattus norvegicus (Rat) protein is Cytochrome P450 2B15 (Cyp2b15).